We begin with the raw amino-acid sequence, 216 residues long: UPF0134 protein MPN_344 (216 aa).

Over residues 47-62 (FTIIEDQQDRPDKPEE) the composition is skewed to basic and acidic residues. Disordered regions lie at residues 47–104 (FTII…PKPD) and 194–216 (GKMD…LESK). The span at 68–78 (IPKPPKPPKGP) shows a compositional bias: pro residues. Over residues 83 to 93 (EPGQPGGPDDP) the composition is skewed to low complexity.

Belongs to the UPF0134 family.

This is UPF0134 protein MPN_344 from Mycoplasma pneumoniae (strain ATCC 29342 / M129 / Subtype 1) (Mycoplasmoides pneumoniae).